A 487-amino-acid chain; its full sequence is Adenosylhomocysteinase (487 aa).

Residues Thr-76, Asp-151, and Glu-212 each coordinate substrate. 213 to 215 (TTT) is an NAD(+) binding site. Residues Lys-242 and Asp-246 each coordinate substrate. Residues Asn-247, 276–281 (GYGDVG), Glu-299, Asn-334, 355–357 (IGH), and Asn-403 contribute to the NAD(+) site.

The protein belongs to the adenosylhomocysteinase family. It depends on NAD(+) as a cofactor.

It is found in the cytoplasm. It carries out the reaction S-adenosyl-L-homocysteine + H2O = L-homocysteine + adenosine. The protein operates within amino-acid biosynthesis; L-homocysteine biosynthesis; L-homocysteine from S-adenosyl-L-homocysteine: step 1/1. Functionally, may play a key role in the regulation of the intracellular concentration of adenosylhomocysteine. The protein is Adenosylhomocysteinase of Bacteroides fragilis (strain YCH46).